Here is a 637-residue protein sequence, read N- to C-terminus: Chaperone protein HtpG (637 aa).

The tract at residues 1-328 is a; substrate-binding; that stretch reads MADIEELKFD…SSDLPLNISR (328 aa). The b stretch occupies residues 329–556; the sequence is ETLQNNRIVE…DNSMDIRMER (228 aa). The segment at 488–508 is disordered; sequence IGASDDSGDKTSEDSGESASD. The segment covering 494 to 508 has biased composition (basic and acidic residues); it reads SGDKTSEDSGESASD. A c region spans residues 557 to 637; it reads FLREQKQLNY…GVLAKIFSSK (81 aa).

It belongs to the heat shock protein 90 family. In terms of assembly, homodimer.

It is found in the cytoplasm. Functionally, molecular chaperone. Has ATPase activity. This Anaplasma phagocytophilum (strain HZ) protein is Chaperone protein HtpG.